A 347-amino-acid polypeptide reads, in one-letter code: Dual specificity mitogen-activated protein kinase kinase mek-1 (347 aa).

The segment at 1 to 42 (MERDFDLGMGRPGGLGGLGGEPIMQQMPQPAPHHPSRSSNDH) is disordered. Residues 10–20 (GRPGGLGGLGG) show a composition bias toward gly residues. A Protein kinase domain is found at 72-325 (LQFVEDIGHG…YDMLLQHPFV (254 aa)). ATP contacts are provided by residues 78–86 (IGHGSCGTV) and lysine 99. The active-site Proton acceptor is aspartate 193. Serine 221 and serine 225 each carry phosphoserine.

Belongs to the protein kinase superfamily. STE Ser/Thr protein kinase family. MAP kinase kinase subfamily. Interacts with shc-1; the interaction is independent of mek-1 catalytic activity, is constitutive and may facilitate mlk-1-mediated phosphorylation by bringing mlk-1 and mek-1 together. The cofactor is Mg(2+). Post-translationally, may be phosphorylated at Ser-221 and/or Ser-225 by mlk-1. In terms of tissue distribution, expressed in pharyngeal muscles, uterine endothelial cells, intestine and in neurons of ring ganglia, ventral ganglion and ganglia around anus. Expressed also in hypodermis and body muscles.

It carries out the reaction L-seryl-[protein] + ATP = O-phospho-L-seryl-[protein] + ADP + H(+). The enzyme catalyses L-threonyl-[protein] + ATP = O-phospho-L-threonyl-[protein] + ADP + H(+). The catalysed reaction is L-tyrosyl-[protein] + ATP = O-phospho-L-tyrosyl-[protein] + ADP + H(+). Its activity is regulated as follows. May be activated by phosphorylation at Ser-221 and Ser-225. Dual specificity protein kinase which may phosphorylate kgb-1 and thereby is an essential component of the JNK pathway composed of mlk-1, mek-1 and kgb-1. May also have a synergistic role with sek-1 in phosphorylating pmk-1. Involved in the response to environmental stress including heavy metal ions (Cu(2+) and Cd(2+)), oxidative stress and starvation. In association with sek-1, regulates germline cell apoptosis in response to oxidative, osmotic and heat shock stresses. Involved in resistance to pathogenic bacteria infection. Involved in axon regeneration after injury. The polypeptide is Dual specificity mitogen-activated protein kinase kinase mek-1 (Caenorhabditis elegans).